A 101-amino-acid chain; its full sequence is AFA-III adhesin operon regulatory protein (101 aa).

In terms of biological role, regulates the transcription of genes involved in the biosynthesis of afimbrial adhesin-III. This chain is AFA-III adhesin operon regulatory protein (afaA), found in Escherichia coli.